A 329-amino-acid chain; its full sequence is Zygote arrest protein 1 (329 aa).

Disordered stretches follow at residues 106–132 and 146–218; these read LRRR…RTQA and FREE…DDLK. Acidic residues predominate over residues 149 to 162; that stretch reads EGEEEEDTDLEVTE. Residues 166–177 are compositionally biased toward basic and acidic residues; sequence SAEKLESAEKNV. The segment at 231–314 adopts a 3CxxC-type zinc-finger fold; sequence KYGFYHCKDC…RQDLCGRCKG (84 aa).

It belongs to the ZAR1 family. Specifically expressed in ovaries but absent in testes.

Its subcellular location is the cytoplasm. The protein resides in the cytoplasmic ribonucleoprotein granule. Its function is as follows. mRNA-binding protein required for maternal mRNA storage, translation and degradation during oocyte maturation. Probably promotes formation of some phase-separated membraneless compartment that stores maternal mRNAs in oocytes: acts by undergoing liquid-liquid phase separation upon binding to maternal mRNAs. Binds to the 3'-UTR of zona pellucida mRNAs, inhibiting their translation. The sequence is that of Zygote arrest protein 1 from Danio rerio (Zebrafish).